Here is a 375-residue protein sequence, read N- to C-terminus: DNA replication and repair protein RecF (375 aa).

Residue 30–37 coordinates ATP; sequence GENAQGKT.

The protein belongs to the RecF family.

The protein localises to the cytoplasm. In terms of biological role, the RecF protein is involved in DNA metabolism; it is required for DNA replication and normal SOS inducibility. RecF binds preferentially to single-stranded, linear DNA. It also seems to bind ATP. This chain is DNA replication and repair protein RecF, found in Enterococcus faecalis (strain ATCC 700802 / V583).